The following is a 244-amino-acid chain: 3-deoxy-manno-octulosonate cytidylyltransferase (244 aa).

This sequence belongs to the KdsB family.

It is found in the cytoplasm. It catalyses the reaction 3-deoxy-alpha-D-manno-oct-2-ulosonate + CTP = CMP-3-deoxy-beta-D-manno-octulosonate + diphosphate. Its pathway is nucleotide-sugar biosynthesis; CMP-3-deoxy-D-manno-octulosonate biosynthesis; CMP-3-deoxy-D-manno-octulosonate from 3-deoxy-D-manno-octulosonate and CTP: step 1/1. It functions in the pathway bacterial outer membrane biogenesis; lipopolysaccharide biosynthesis. Its function is as follows. Activates KDO (a required 8-carbon sugar) for incorporation into bacterial lipopolysaccharide in Gram-negative bacteria. The chain is 3-deoxy-manno-octulosonate cytidylyltransferase from Dichelobacter nodosus (strain VCS1703A).